A 107-amino-acid polypeptide reads, in one-letter code: Transcriptional regulator Rv3488 (107 aa).

The Cd(2+) site is built by His-16, Glu-30, His-34, and His-101.

In terms of assembly, homodimer.

In terms of biological role, may have transcription regulation and metal-detoxifying functions through which it may enhance intracellular survival of mycobacteria. Binds to its own promoter region and to the Rv1999c promoter region. It displays strong affinity for cadmium ions, but can also bind zinc, manganese and nickel. Expression increases the intracellular survival of recombinant M.smegmatis in murine macrophage cell line and increases its tolerance to cadmium ions. The protein is Transcriptional regulator Rv3488 of Mycobacterium tuberculosis (strain ATCC 25618 / H37Rv).